The chain runs to 41 residues: ECTIGDSCVVHRHCRECRCPRGRAMCDREHHKPPHCSCHIH.

In terms of processing, contains four disulfide bonds.

In terms of biological role, binds to calcite crystals in the shell and inhibits further shell growth at the binding site. The chain is Perlinhibin from Haliotis laevigata (Smooth Australian abalone).